The primary structure comprises 194 residues: Holliday junction branch migration complex subunit RuvA (194 aa).

The tract at residues 1–63 is domain I; that stretch reads MFEYMKGMIV…EDEAHLYGFV (63 aa). Positions 64-142 are domain II; that stretch reads DKEELAMFKK…DSQVEYDQNF (79 aa). The tract at residues 143–146 is flexible linker; the sequence is FNHE. The domain III stretch occupies residues 146–194; that stretch reads ENKNNNEVVDALMALGYTKHEGEQAASAVRDTSLSTEEMIRKALNWLAR.

It belongs to the RuvA family. In terms of assembly, homotetramer. Forms an RuvA(8)-RuvB(12)-Holliday junction (HJ) complex. HJ DNA is sandwiched between 2 RuvA tetramers; dsDNA enters through RuvA and exits via RuvB. An RuvB hexamer assembles on each DNA strand where it exits the tetramer. Each RuvB hexamer is contacted by two RuvA subunits (via domain III) on 2 adjacent RuvB subunits; this complex drives branch migration. In the full resolvosome a probable DNA-RuvA(4)-RuvB(12)-RuvC(2) complex forms which resolves the HJ.

The protein localises to the cytoplasm. In terms of biological role, the RuvA-RuvB-RuvC complex processes Holliday junction (HJ) DNA during genetic recombination and DNA repair, while the RuvA-RuvB complex plays an important role in the rescue of blocked DNA replication forks via replication fork reversal (RFR). RuvA specifically binds to HJ cruciform DNA, conferring on it an open structure. The RuvB hexamer acts as an ATP-dependent pump, pulling dsDNA into and through the RuvAB complex. HJ branch migration allows RuvC to scan DNA until it finds its consensus sequence, where it cleaves and resolves the cruciform DNA. In Alkaliphilus metalliredigens (strain QYMF), this protein is Holliday junction branch migration complex subunit RuvA.